We begin with the raw amino-acid sequence, 607 residues long: MATEKGDQNAEKIEQSLPQKIPYWRLVVDQGVLTQQIIDYPYKGSGTEEDPYEVVWMENDPRNPMTWTQLRKWSLTMTVAVSTLAVALVSSAYTGGVREIEAEFHIGSEVATLGVSLFVLGFAIGPLLWAPLSEMFGRQIIFTVTYCALTAFNAGSAGAQNSWTLIILRFFAGAFGASPLTNAGGVIADMFHAKQRGIAMSLFAAAPFLGPVLGPIIGGFLGMNAGWRWVMGFLGAFSGAVWIICTIFVPETYAPVLLRRRAEKLSKHTGKVYVSKIDIDQGRVTLKDAFKTALSRPWILLFKEPIVFLLSLYMAIIYGTLYMLFSAYPIVFQGVRHWNQGVSSLPFLGIMVGMMFAVTYSVWDNKRYVQVQAKHGGFAPPEARLPPTLIASVAIPIGLFWFAWTNYPSIHWIVCILAGAPFGFGMVLVFLGIMNYLIDAYTIFAASVLAANSVLRSIFGAVFPLFTTYMYEDLGIHWASSIPAFLALACVPFPFLFYKYGATIRKRCEYAAKSDAFMRKLAEQMKQAPEPESEETEEPVFDRTEAPAPDVSDVSETESNVEELPDVRQMRSRASTRTASSLRRVVSYEGNPYDIDRVNTRESFTKK.

Helical transmembrane passes span 77 to 97 (MTVAVSTLAVALVSSAYTGGV), 110 to 130 (VATLGVSLFVLGFAIGPLLWA), 139 to 159 (QIIFTVTYCALTAFNAGSAGA), 170 to 190 (FFAGAFGASPLTNAGGVIADM), 202 to 222 (LFAAAPFLGPVLGPIIGGFLG), 229 to 249 (WVMGFLGAFSGAVWIICTIFV), 305 to 325 (PIVFLLSLYMAIIYGTLYMLF), 342 to 362 (VSSLPFLGIMVGMMFAVTYSV), 385 to 405 (LPPTLIASVAIPIGLFWFAWT), 413 to 433 (IVCILAGAPFGFGMVLVFLGI), 443 to 463 (IFAASVLAANSVLRSIFGAVF), and 478 to 498 (WASSIPAFLALACVPFPFLFY). Positions 523 to 583 (EQMKQAPEPE…ASTRTASSLR (61 aa)) are disordered. Acidic residues predominate over residues 553 to 564 (DVSETESNVEEL). Low complexity predominate over residues 572 to 583 (SRASTRTASSLR).

The protein belongs to the major facilitator superfamily. DHA1 family. Polyamines/proton antiporter (TC 2.A.1.2.16) subfamily.

It localises to the cell membrane. Functionally, MFS transporter involved in the basal level of azole susceptibility. Confers resistance to voriconazole and, to a lesser extent, to fluconazole. In Aspergillus fumigatus (strain ATCC MYA-4609 / CBS 101355 / FGSC A1100 / Af293) (Neosartorya fumigata), this protein is Major facilitator superfamily multidrug transporter mdrA.